Here is a 288-residue protein sequence, read N- to C-terminus: Bifunctional protein FolD (288 aa).

Residues 166–168 and isoleucine 232 contribute to the NADP(+) site; that span reads GAS.

This sequence belongs to the tetrahydrofolate dehydrogenase/cyclohydrolase family. Homodimer.

The enzyme catalyses (6R)-5,10-methylene-5,6,7,8-tetrahydrofolate + NADP(+) = (6R)-5,10-methenyltetrahydrofolate + NADPH. The catalysed reaction is (6R)-5,10-methenyltetrahydrofolate + H2O = (6R)-10-formyltetrahydrofolate + H(+). It functions in the pathway one-carbon metabolism; tetrahydrofolate interconversion. Functionally, catalyzes the oxidation of 5,10-methylenetetrahydrofolate to 5,10-methenyltetrahydrofolate and then the hydrolysis of 5,10-methenyltetrahydrofolate to 10-formyltetrahydrofolate. This is Bifunctional protein FolD from Escherichia coli (strain SMS-3-5 / SECEC).